The following is a 240-amino-acid chain: UDP-2,3-diacylglucosamine hydrolase (240 aa).

Mn(2+)-binding residues include Asp8, His10, Asp41, Asn79, and His114. 79–80 contacts substrate; sequence NR. Positions 122, 160, 164, 167, and 195 each coordinate substrate. Mn(2+) contacts are provided by His195 and His197.

The protein belongs to the LpxH family. It depends on Mn(2+) as a cofactor.

The protein resides in the cell inner membrane. The catalysed reaction is UDP-2-N,3-O-bis[(3R)-3-hydroxytetradecanoyl]-alpha-D-glucosamine + H2O = 2-N,3-O-bis[(3R)-3-hydroxytetradecanoyl]-alpha-D-glucosaminyl 1-phosphate + UMP + 2 H(+). The protein operates within glycolipid biosynthesis; lipid IV(A) biosynthesis; lipid IV(A) from (3R)-3-hydroxytetradecanoyl-[acyl-carrier-protein] and UDP-N-acetyl-alpha-D-glucosamine: step 4/6. Functionally, hydrolyzes the pyrophosphate bond of UDP-2,3-diacylglucosamine to yield 2,3-diacylglucosamine 1-phosphate (lipid X) and UMP by catalyzing the attack of water at the alpha-P atom. Involved in the biosynthesis of lipid A, a phosphorylated glycolipid that anchors the lipopolysaccharide to the outer membrane of the cell. The sequence is that of UDP-2,3-diacylglucosamine hydrolase from Pseudomonas paraeruginosa (strain DSM 24068 / PA7) (Pseudomonas aeruginosa (strain PA7)).